Consider the following 611-residue polypeptide: Glutathione hydrolase proenzyme 2 (611 aa).

The Cytoplasmic portion of the chain corresponds to 1 to 42; sequence MSPTDTTPLLYSWDDQSRHQDPDWHKLRNYHGAWYRRISRRR. The helical; Signal-anchor for type II membrane protein transmembrane segment at 43 to 63 threads the bilayer; the sequence is FSQFIFAFGLMTLFVLVYSIS. At 64–611 the chain is on the lumenal side; the sequence is SNLHTPTQFT…PRKYGQAAAY (548 aa). N-linked (GlcNAc...) asparagine glycosylation occurs at N138. R147 serves as a coordination point for L-glutamate. N153, N297, and N396 each carry an N-linked (GlcNAc...) asparagine glycan. T420 serves as the catalytic Nucleophile. L-glutamate-binding positions include T438, N440, Q459, D462, 490 to 491, and 512 to 513; these read SS and GG.

It belongs to the gamma-glutamyltransferase family. As to quaternary structure, heterodimer composed of the light and heavy chains. The active site is located in the light chain. Post-translationally, cleaved by autocatalysis into a large and a small subunit.

The protein resides in the vacuole membrane. It carries out the reaction an N-terminal (5-L-glutamyl)-[peptide] + an alpha-amino acid = 5-L-glutamyl amino acid + an N-terminal L-alpha-aminoacyl-[peptide]. The catalysed reaction is glutathione + H2O = L-cysteinylglycine + L-glutamate. The enzyme catalyses an S-substituted glutathione + H2O = an S-substituted L-cysteinylglycine + L-glutamate. Its pathway is sulfur metabolism; glutathione metabolism. Its function is as follows. Catalyzes the transfer of the gamma-glutamyl moiety of glutathione (GSH) and other gamma-glutamyl compounds to amino acids and peptides. Major GSH-degrading enzyme, catalyzing the hydrolytic release of L-glutamate from GSH. Plays a role in the turnover of the vacuolar GSH, serving as an alternative nitrogen source during nitrogen starvation. This chain is Glutathione hydrolase proenzyme 2 (ggt2), found in Schizosaccharomyces pombe (strain 972 / ATCC 24843) (Fission yeast).